The primary structure comprises 239 residues: Probable transcriptional regulatory protein MG332 (239 aa).

Belongs to the TACO1 family.

It is found in the cytoplasm. The protein is Probable transcriptional regulatory protein MG332 of Mycoplasma genitalium (strain ATCC 33530 / DSM 19775 / NCTC 10195 / G37) (Mycoplasmoides genitalium).